The sequence spans 310 residues: tRNA methyltransferase 10 homolog B (310 aa).

Positions R55–K94 form a coiled coil. Residues T101–V298 form the SAM-dependent MTase TRM10-type domain.

This sequence belongs to the class IV-like SAM-binding methyltransferase superfamily. TRM10 family.

The catalysed reaction is guanosine(9) in tRNA + S-adenosyl-L-methionine = N(1)-methylguanosine(9) in tRNA + S-adenosyl-L-homocysteine + H(+). S-adenosyl-L-methionine-dependent guanine N(1)-methyltransferase that catalyzes the formation of N(1)-methylguanine at position 9 (m1G9) in tRNAs. Probably not able to catalyze formation of N(1)-methyladenine at position 9 (m1A9) in tRNAs. This is tRNA methyltransferase 10 homolog B (trmt10b) from Danio rerio (Zebrafish).